The sequence spans 499 residues: Neuropeptide CCHamide-1 receptor (499 aa).

The Extracellular segment spans residues 1-85 (MIANLVSMET…GRRPETYIVP (85 aa)). 2 N-linked (GlcNAc...) asparagine glycosylation sites follow: Asn33 and Asn61. Residues 86–106 (ILFALIFVVGVLGNGTLIVVF) traverse the membrane as a helical segment. Over 107–117 (LSVRQMRNVPN) the chain is Cytoplasmic. A helical membrane pass occupies residues 118 to 138 (TYILSLALADLLVIITTVPLA). At 139–162 (STVYTVEYWPYGSFLCSLSEFMKD) the chain is on the extracellular side. Cys154 and Cys240 are oxidised to a cystine. Residues 163–183 (VSIGVSVFTLTALSGDRYFAI) traverse the membrane as a helical segment. Residues 184–203 (VDPLRKFHAHGGGRRATRMT) lie on the Cytoplasmic side of the membrane. Residues 204–224 (LATAVSIWLLAILCGLPALIG) traverse the membrane as a helical segment. Residues 225 to 259 (SNLKHLGINEKSIVICYPYPEEWGINYAKSMVLLH) lie on the Extracellular side of the membrane. A helical membrane pass occupies residues 260–280 (FLVYYAIPLVVIAVFYVLIAL). Over 281 to 309 (HLMYSASVPGEIQGAVRQVRARRKVAVTV) the chain is Cytoplasmic. A helical transmembrane segment spans residues 310-330 (LAFVVIFGICFLPYHVFFLWF). The Extracellular segment spans residues 331–348 (YFWPTAQDDYNAFWHVLR). Residues 349–369 (IVAYCMSFANSCANPVALYFV) traverse the membrane as a helical segment. Residues 370–499 (SGAFRKHFNR…PAKFQESLLN (130 aa)) are Cytoplasmic-facing.

It belongs to the G-protein coupled receptor 1 family. Low levels in larval brain and gut with higher levels in adult brain and gut. In the brain expression is widely distributed, including strong expression in the mushroom bodies. Expressed weakly in s-LNv (small ventral lateral neurons) and strongly in l-LNv (large ventral lateral neurons), but not in other clock neurons.

The protein localises to the cell membrane. Receptor for the neuropeptide CCHamide-1. Plays a role in the modulation of starvation-induced olfactory behavior where starved flies show increased responsiveness to food odorants, repellants and pheromones. Contributes to regulation of sleep latency (the time required to fall asleep), amount of sleep and depth of sleep (arousability). Involved in modulation of PDP1 and PDF levels in s-LNv (small ventral lateral neurons) clock neurons in response to CCHa1 released by DN1a (anterior dorsal neurons 1) clock neurons, to regulate morning activity. In a subset of dopaminergic cells in the protocerebral anterior medial (PAM) cluster involved in suppressing arousability in response to CCHa1 secreted by gut enteroendocrine cells. The chain is Neuropeptide CCHamide-1 receptor from Drosophila melanogaster (Fruit fly).